A 495-amino-acid chain; its full sequence is UDP-N-acetylmuramoyl-L-alanyl-D-glutamate--2,6-diaminopimelate ligase (495 aa).

UDP-N-acetyl-alpha-D-muramoyl-L-alanyl-D-glutamate contacts are provided by residues Leu-27, Ser-29, and 44–46 (HQT). 116 to 122 (GTNGKTT) is an ATP binding site. UDP-N-acetyl-alpha-D-muramoyl-L-alanyl-D-glutamate is bound by residues Asn-157, 158–159 (TT), Ser-185, Gln-191, and Arg-193. Lys-225 is modified (N6-carboxylysine). Meso-2,6-diaminopimelate is bound by residues Arg-390, 414–417 (DNPR), Gly-465, and Glu-469. Positions 414–417 (DNPR) match the Meso-diaminopimelate recognition motif motif.

It belongs to the MurCDEF family. MurE subfamily. Mg(2+) serves as cofactor. Post-translationally, carboxylation is probably crucial for Mg(2+) binding and, consequently, for the gamma-phosphate positioning of ATP.

Its subcellular location is the cytoplasm. The enzyme catalyses UDP-N-acetyl-alpha-D-muramoyl-L-alanyl-D-glutamate + meso-2,6-diaminopimelate + ATP = UDP-N-acetyl-alpha-D-muramoyl-L-alanyl-gamma-D-glutamyl-meso-2,6-diaminopimelate + ADP + phosphate + H(+). Its pathway is cell wall biogenesis; peptidoglycan biosynthesis. Its function is as follows. Catalyzes the addition of meso-diaminopimelic acid to the nucleotide precursor UDP-N-acetylmuramoyl-L-alanyl-D-glutamate (UMAG) in the biosynthesis of bacterial cell-wall peptidoglycan. This is UDP-N-acetylmuramoyl-L-alanyl-D-glutamate--2,6-diaminopimelate ligase from Sodalis glossinidius (strain morsitans).